We begin with the raw amino-acid sequence, 196 residues long: CRISPR-associated exonuclease Cas4 (196 aa).

Cys23 contacts [4Fe-4S] cluster. Mn(2+)-binding residues include His50, Asp90, and Glu103. The [4Fe-4S] cluster site is built by Cys184, Cys187, and Cys193.

This sequence belongs to the CRISPR-associated exonuclease Cas4 family. It depends on Mg(2+) as a cofactor. [4Fe-4S] cluster serves as cofactor.

It carries out the reaction exonucleolytic cleavage in the 5'- to 3'-direction to yield nucleoside 3'-phosphates.. Its function is as follows. CRISPR (clustered regularly interspaced short palindromic repeat) is an adaptive immune system that provides protection against mobile genetic elements (viruses, transposable elements and conjugative plasmids). CRISPR clusters contain sequences complementary to antecedent mobile elements and target invading nucleic acids. CRISPR clusters are transcribed and processed into CRISPR RNA (crRNA). This may be a 5' to 3' ssDNA exonuclease. This Francisella tularensis subsp. novicida (strain U112) protein is CRISPR-associated exonuclease Cas4.